We begin with the raw amino-acid sequence, 530 residues long: UDP-glucuronosyltransferase 2A3 (530 aa).

The first 23 residues, 1-23, serve as a signal peptide directing secretion; sequence MAPGKLASAVLLLLLCCAGSGFC. At 24 to 494 the chain is on the extracellular side; it reads GKVLVWPCEM…SWFQYHSLDV (471 aa). A glycan (N-linked (GlcNAc...) asparagine) is linked at N316. Residues 495–515 form a helical membrane-spanning segment; the sequence is IGFLLACVASAILLVTKCCLF. Residues 516-530 are Cytoplasmic-facing; that stretch reads SFQNFIKIGKRIKKE.

This sequence belongs to the UDP-glycosyltransferase family. Specifically expressed in liver and small intestine.

Its subcellular location is the membrane. The catalysed reaction is glucuronate acceptor + UDP-alpha-D-glucuronate = acceptor beta-D-glucuronoside + UDP + H(+). UDP-glucuronosyltransferases catalyze phase II biotransformation reactions in which lipophilic substrates are conjugated with glucuronic acid to increase water solubility and enhance excretion. They are of major importance in the conjugation and subsequent elimination of potentially toxic xenobiotics and endogenous compounds. This chain is UDP-glucuronosyltransferase 2A3 (UGT2A3), found in Cavia porcellus (Guinea pig).